The chain runs to 390 residues: tRNA(Met) cytidine acetate ligase (390 aa).

Residues 7–20, G101, N162, and R187 contribute to the ATP site; that span reads VVEY…HKLH.

This sequence belongs to the TmcAL family.

The protein resides in the cytoplasm. The enzyme catalyses cytidine(34) in elongator tRNA(Met) + acetate + ATP = N(4)-acetylcytidine(34) in elongator tRNA(Met) + AMP + diphosphate. In terms of biological role, catalyzes the formation of N(4)-acetylcytidine (ac(4)C) at the wobble position of elongator tRNA(Met), using acetate and ATP as substrates. First activates an acetate ion to form acetyladenylate (Ac-AMP) and then transfers the acetyl group to tRNA to form ac(4)C34. The polypeptide is tRNA(Met) cytidine acetate ligase (Listeria monocytogenes serotype 4b (strain CLIP80459)).